The following is an 865-amino-acid chain: Aconitate hydratase B (865 aa).

Substrate-binding positions include arginine 191, 244 to 246 (SSR), 414 to 416 (QDT), and serine 498. Cysteine 710, cysteine 769, and cysteine 772 together coordinate [4Fe-4S] cluster. Residues arginine 791 and arginine 796 each contribute to the substrate site.

The protein belongs to the aconitase/IPM isomerase family. In terms of assembly, monomer. The cofactor is [4Fe-4S] cluster.

The enzyme catalyses citrate = D-threo-isocitrate. The catalysed reaction is (2S,3R)-3-hydroxybutane-1,2,3-tricarboxylate = 2-methyl-cis-aconitate + H2O. It participates in carbohydrate metabolism; tricarboxylic acid cycle; isocitrate from oxaloacetate: step 2/2. Its pathway is organic acid metabolism; propanoate degradation. Its function is as follows. Involved in the catabolism of short chain fatty acids (SCFA) via the tricarboxylic acid (TCA)(acetyl degradation route) and the 2-methylcitrate cycle I (propionate degradation route). Catalyzes the reversible isomerization of citrate to isocitrate via cis-aconitate. Also catalyzes the hydration of 2-methyl-cis-aconitate to yield (2R,3S)-2-methylisocitrate. The apo form of AcnB functions as a RNA-binding regulatory protein which regulates FliC synthesis via interaction with the ftsH transcript to decrease the intracellular levels of FtsH. The lower levels of FtsH protease activity then influence sigma-32, DnaK and ultimately FliC production. The polypeptide is Aconitate hydratase B (acnB) (Salmonella typhimurium (strain LT2 / SGSC1412 / ATCC 700720)).